Consider the following 197-residue polypeptide: Probable UbiX-like flavin prenyltransferase (197 aa).

FMN contacts are provided by residues 9 to 11 (GAT), Ser36, 87 to 90 (SMKT), and Arg122.

This sequence belongs to the UbiX/PAD1 family. YclB subfamily. As to quaternary structure, homododecamer.

The catalysed reaction is dimethylallyl phosphate + FMNH2 = prenylated FMNH2 + phosphate. Functionally, flavin prenyltransferase that catalyzes the synthesis of the prenylated FMN cofactor (prenyl-FMN) for phenolic acid decarboxylase C. Involved in the decarboxylation and detoxification of phenolic derivatives under both aerobic and anaerobic conditions. The sequence is that of Probable UbiX-like flavin prenyltransferase (ecdB) from Escherichia coli O111:H-.